The following is a 701-amino-acid chain: Elongation factor G (701 aa).

Residues 10 to 290 (AKVRNIGIMA…AVVDYLPSPL (281 aa)) enclose the tr-type G domain. GTP-binding positions include 19 to 26 (AHIDAGKT), 83 to 87 (DTPGH), and 137 to 140 (NKMD).

The protein belongs to the TRAFAC class translation factor GTPase superfamily. Classic translation factor GTPase family. EF-G/EF-2 subfamily.

The protein resides in the cytoplasm. Its function is as follows. Catalyzes the GTP-dependent ribosomal translocation step during translation elongation. During this step, the ribosome changes from the pre-translocational (PRE) to the post-translocational (POST) state as the newly formed A-site-bound peptidyl-tRNA and P-site-bound deacylated tRNA move to the P and E sites, respectively. Catalyzes the coordinated movement of the two tRNA molecules, the mRNA and conformational changes in the ribosome. The protein is Elongation factor G of Tropheryma whipplei (strain Twist) (Whipple's bacillus).